A 1877-amino-acid polypeptide reads, in one-letter code: Proprotein convertase subtilisin/kexin type 5 (1877 aa).

An N-terminal signal peptide occupies residues 1–34 (MDWDWGNRCSRPGRRDLLCVLALLAGCLLPVCRT). Positions 35–116 (RVYTNHWAVK…QQVVKKRTKR (82 aa)) are excised as a propeptide. Residues 117 to 1768 (DYDLSHAQST…EAEFYEHTKT (1652 aa)) lie on the Extracellular side of the membrane. The 320-residue stretch at 136 to 455 (MWYMHCSDNT…FGLMDAEAMV (320 aa)) folds into the Peptidase S8 domain. Catalysis depends on charge relay system residues D173 and H214. N-linked (GlcNAc...) asparagine glycosylation is found at N227 and N383. Residue S388 is the Charge relay system of the active site. A P/Homo B domain is found at 463–603 (TVPQQHVCVE…SLVLYGTSVQ (141 aa)). A Cell attachment site motif is present at residues 521–523 (RGD). FU repeat units lie at residues 632–682 (EDYA…GHYH), 685–732 (KKRC…GSYE), 736–779 (KNVC…GQFF), 781–826 (GHDC…SYYL), 834–881 (YKSC…GEYI), 884–929 (QGHC…WKFE), 931–981 (KKQC…GHYP), 984–1030 (GHAC…GEFQ), 1034–1079 (YEEC…KTFG), 1081–1123 (KWEC…GFHG), 1127–1168 (LGEC…STWP), 1206–1248 (TSQN…GTWP), 1252–1299 (SGSC…GFYA), 1301–1345 (DGVC…KHVA), 1347–1390 (EGVC…SFYP), 1392–1438 (MRQC…GTYK), 1442–1487 (NDEC…VEYW), 1491–1536 (SHRC…GYHT), 1540–1585 (SQQC…GYYG), 1589–1636 (SGRC…HYYA), 1640–1685 (AQTC…GEYR), and 1691–1738 (NFNC…SHSR). Residues 638 to 1753 (CDPECSEVGC…CDCQSSTDEC (1116 aa)) are CRM (Cys-rich motif). N667 carries N-linked (GlcNAc...) asparagine glycosylation. N-linked (GlcNAc...) asparagine glycosylation is found at N754, N804, and N854. N951 and N1016 each carry an N-linked (GlcNAc...) asparagine glycan. The N-linked (GlcNAc...) asparagine glycan is linked to N1220. A glycan (N-linked (GlcNAc...) asparagine) is linked at N1317. An N-linked (GlcNAc...) asparagine glycan is attached at N1523. Residues N1711 and N1733 are each glycosylated (N-linked (GlcNAc...) asparagine). Residues 1769 to 1789 (ALLVTSGAMLLLLLGAAAVVW) form a helical membrane-spanning segment. The Cytoplasmic segment spans residues 1790-1877 (RKSRSRPVAK…EYDDESYSYQ (88 aa)). AC regions lie at residues 1825–1844 (VIEYRDRDYDEDDEDDIVYM) and 1856–1877 (YGLLDETEDDELEYDDESYSYQ).

It belongs to the peptidase S8 family. In terms of tissue distribution, PC5A is expressed in most tissues but is most abundant in the intestine and adrenals. PC5B is expressed in the intestine, adrenals and lung but not in the brain.

It localises to the secreted. Its subcellular location is the endomembrane system. Its function is as follows. Serine endoprotease that processes various proproteins by cleavage at paired basic amino acids, recognizing the RXXX[KR]R consensus motif. Likely functions in the constitutive and regulated secretory pathways. Plays an essential role in pregnancy establishment by proteolytic activation of a number of important factors such as BMP2, CALD1 and alpha-integrins. May be responsible for the maturation of gastrointestinal peptides. May be involved in the cellular proliferation of adrenal cortex via the activation of growth factors. The sequence is that of Proprotein convertase subtilisin/kexin type 5 (Pcsk5) from Mus musculus (Mouse).